A 182-amino-acid polypeptide reads, in one-letter code: Oligoribonuclease (182 aa).

Positions 7-170 constitute an Exonuclease domain; the sequence is LIWIDLEMTG…EDIRESVEEL (164 aa). Tyr-128 is a catalytic residue.

It belongs to the oligoribonuclease family.

Its subcellular location is the cytoplasm. In terms of biological role, 3'-to-5' exoribonuclease specific for small oligoribonucleotides. The sequence is that of Oligoribonuclease from Hahella chejuensis (strain KCTC 2396).